The primary structure comprises 1079 residues: MTSATPLPVLPDYAELHCISNFTFLTGASHPSELVERAKLYGYQALALTDECSVAGTARALVASKEHELKLIIGSRFTVRNADGEPWLRLVLLAQNIEGYGNLSEIITHARLAAPKGEYRLLADDLASPQGELAHLRGAPDCLAILLPDYDPDPQQLLAQAWWCQRVFGDRLSIALELPLRHADDRHRGTVLAVSEQIDVPMVATGGVQMHTRQRKPLHDVLTAIRLSKPLSECGLELAPSAEQAMRTRMQLAFLYQGEGGEKILRRTVELAALCNFSLDEIEYEYPSEVVPEGMTPAEYLRAETFAGAARRYPNGVSEKVHAQIEEELGLIAELGYEPFFLTVYDVVKFARNEGILCQGRGSAANSAVCYCLGITEVNPDSGNTLFARFLSRARNEPPDIDVDFEHQRREEVIQYIYKKYGVTRTALAAALITYRTRSALRDVGRALGIDLGIVEQVAKGQAWWDSRKEFAQRAGQQGLDPESPLVLRWAQLVDQLRGFPRHLSQHVGGFVIAQGKLSRLVPIENAAMENRRVIQWDKDDLESLRLLKVDVLALGMLTAIRRTLDMVDALPGRREHYGATAKLAMQNLPDDDTETYDMICRAETIGVFQIESRAQQSMLPRLRPREYYDLVIQVAIVRPGPIQGGMVHPYLQRREAKRNGNTDCVTYPGPEVKAVLERTLGVPIFQEQVMEIAMKAGDFTADDADRLRRDMAAWKRKGNLTQHQERLVHAMVVKRRYDPAFVEALCKQMEGFAEYGFPESHAAGFAKLAYVSSFLKCHEPAAFFAALLNSQPMGFYSPSQLVQEARRSHVRVLPADVTASVWDSTLHPRADGETGEDGLVQPDIRLGLNRIRGMRKPAAERIEAARAQAPFTSVEDLAHRAALDRHDLNVLAAANALKSLAGHRRQALWQTLALQEPGHDHALLRQARPVEAPLELPAPPIGEEVMADYGSLGLSLQSHPVELLRARLERMRFATAATLAGYRNGQLARACGIVTVRQRPGTANGTIFVSIEDETGAINVILWPHLIERQRREVLNAQLLGVYGKWQCERETRHLVAQHLVDLTPLLGRLATSSRDFH.

It belongs to the DNA polymerase type-C family. DnaE2 subfamily.

It localises to the cytoplasm. The enzyme catalyses DNA(n) + a 2'-deoxyribonucleoside 5'-triphosphate = DNA(n+1) + diphosphate. Its function is as follows. DNA polymerase involved in damage-induced mutagenesis and translesion synthesis (TLS). It is not the major replicative DNA polymerase. This chain is Error-prone DNA polymerase, found in Ralstonia pickettii (strain 12J).